A 280-amino-acid polypeptide reads, in one-letter code: Shikimate dehydrogenase (NADP(+)) (280 aa).

Shikimate-binding positions include Ser18 to Ser20 and Thr65. Lys69 serves as the catalytic Proton acceptor. Residues Asn90 and Asp105 each contribute to the shikimate site. NADP(+) is bound by residues Gly130–Ala134, Asn154–Arg159, and Leu219. Tyr221 is a shikimate binding site. NADP(+) is bound at residue Gly242.

Belongs to the shikimate dehydrogenase family. In terms of assembly, homodimer.

The catalysed reaction is shikimate + NADP(+) = 3-dehydroshikimate + NADPH + H(+). The protein operates within metabolic intermediate biosynthesis; chorismate biosynthesis; chorismate from D-erythrose 4-phosphate and phosphoenolpyruvate: step 4/7. Involved in the biosynthesis of the chorismate, which leads to the biosynthesis of aromatic amino acids. Catalyzes the reversible NADPH linked reduction of 3-dehydroshikimate (DHSA) to yield shikimate (SA). The protein is Shikimate dehydrogenase (NADP(+)) of Mesorhizobium japonicum (strain LMG 29417 / CECT 9101 / MAFF 303099) (Mesorhizobium loti (strain MAFF 303099)).